The sequence spans 414 residues: Eukaryotic initiation factor 4A (414 aa).

Residues 41–69 carry the Q motif motif; the sequence is ESFDDMGLQENLLRGIYAYGFEKPSAIQQ. Positions 72–242 constitute a Helicase ATP-binding domain; it reads IVPFCKGLDV…RKFMNKPVRI (171 aa). Residue 85-92 coordinates ATP; the sequence is AQSGTGKT. Positions 190-193 match the DEAD box motif; sequence DEAD. Positions 253–414 constitute a Helicase C-terminal domain; it reads GIKQFYVNVE…ELPANVADLL (162 aa).

This sequence belongs to the DEAD box helicase family. eIF4A subfamily. As to quaternary structure, eIF4F is a multi-subunit complex, the composition of which varies with external and internal environmental conditions. It is composed of at least EIF4A, EIF4E and EIF4G.

It carries out the reaction ATP + H2O = ADP + phosphate + H(+). ATP-dependent RNA helicase which is a subunit of the eIF4F complex involved in cap recognition and is required for mRNA binding to ribosome. In the current model of translation initiation, eIF4A unwinds RNA secondary structures in the 5'-UTR of mRNAs which is necessary to allow efficient binding of the small ribosomal subunit, and subsequent scanning for the initiator codon. This Triticum aestivum (Wheat) protein is Eukaryotic initiation factor 4A.